A 669-amino-acid polypeptide reads, in one-letter code: NADH-ubiquinone oxidoreductase chain 5 (669 aa).

The next 14 membrane-spanning stretches (helical) occupy residues 3-23 (LLIV…GRFL), 40-60 (SILS…CYLR), 76-96 (FLFD…SSLV), 113-133 (FMCY…GDNF), 136-156 (LFLG…FWFT), 217-237 (AISL…AQIG), 250-270 (TPVS…FMIA), 283-303 (LIVI…TGIL), 319-339 (LGYM…FHLM), 340-360 (NHAF…HAMS), 375-395 (FPLT…FPFL), 417-437 (NFAF…SFRL), 461-481 (IPMA…GYLA), and 619-639 (GFVY…VTFF).

The protein belongs to the complex I subunit 5 family. In terms of assembly, complex I is composed of at least 49 different subunits.

It is found in the mitochondrion inner membrane. It catalyses the reaction a ubiquinone + NADH + 5 H(+)(in) = a ubiquinol + NAD(+) + 4 H(+)(out). Its function is as follows. Core subunit of the mitochondrial membrane respiratory chain NADH dehydrogenase (Complex I) that is believed to belong to the minimal assembly required for catalysis. Complex I functions in the transfer of electrons from NADH to the respiratory chain. The immediate electron acceptor for the enzyme is believed to be ubiquinone. The polypeptide is NADH-ubiquinone oxidoreductase chain 5 (ND5) (Arabidopsis thaliana (Mouse-ear cress)).